The primary structure comprises 118 residues: Protein MGF 110-6L (118 aa).

An N-terminal signal peptide occupies residues 1–18 (MLVTFLGILGLLASQVSS). The short motif at 115–118 (KDEL) is the Prevents secretion from ER element.

It belongs to the asfivirus MGF 110 family. Post-translationally, N-glycosylated.

Its subcellular location is the host endoplasmic reticulum lumen. Its function is as follows. Plays a role in virus cell tropism, and may be required for efficient virus replication in macrophages. The polypeptide is Protein MGF 110-6L (Ornithodoros (relapsing fever ticks)).